We begin with the raw amino-acid sequence, 74 residues long: Antimicrobial peptide 36.4 (74 aa).

The signal sequence occupies residues 1–22 (MKVNVLLAVFLVVMVVTDHCHA). At Lys39 the chain carries Lysine amide. The propeptide occupies 44–74 (LQMEARFQPQNKNYRKRELDLENLFTHMPDY).

The protein belongs to the non-disulfide-bridged peptide (NDBP) superfamily. Short antimicrobial peptide (group 4) family. Expressed by the venom gland.

It localises to the secreted. The protein resides in the target cell membrane. Functionally, cationic host defense peptide that have antibacterial activity by breaking membranes. Is more effective on Gram-positive than on Gram-negative bacteria. In Lychas mucronatus (Chinese swimming scorpion), this protein is Antimicrobial peptide 36.4.